Consider the following 202-residue polypeptide: Uclacyanin-2 (202 aa).

The first 29 residues, 1 to 29 (MAMNGLSKMAVAAATALLLVLTIVPGAVA), serve as a signal peptide directing secretion. The 97-residue stretch at 30–126 (VTYTIEWTTG…GMKLAVNVVA (97 aa)) folds into the Phytocyanin domain. Position 65 (H65) interacts with Cu cation. N-linked (GlcNAc...) asparagine glycosylation is present at N86. Residues C106, H111, and M118 each coordinate Cu cation. The disordered stretch occupies residues 129–181 (AGPPATPTPPSSTPGTPTTPESPPSGGSPTPTTPTPGAGSTSPPPPPKASGAS). A compositionally biased stretch (low complexity) spans 141-169 (TPGTPTTPESPPSGGSPTPTTPTPGAGST). S178 carries the GPI-anchor amidated serine lipid modification. A propeptide spans 179–202 (GASKGVMSYVLVGVSMVLGYGLWM) (removed in mature form).

The protein localises to the cell membrane. Functionally, probably acts as an electron carrier involved in oxygen activation and/or lignin formation. The sequence is that of Uclacyanin-2 from Arabidopsis thaliana (Mouse-ear cress).